The chain runs to 147 residues: Small ribosomal subunit protein bS6 (147 aa).

The interval 103-147 (AARMAANLPSFPEDEDTEEKGSAPLAREEEGIGEEAQTDEAEDKE) is disordered. A compositionally biased stretch (acidic residues) spans 133 to 147 (GIGEEAQTDEAEDKE).

This sequence belongs to the bacterial ribosomal protein bS6 family.

In terms of biological role, binds together with bS18 to 16S ribosomal RNA. The protein is Small ribosomal subunit protein bS6 of Syntrophobacter fumaroxidans (strain DSM 10017 / MPOB).